A 271-amino-acid polypeptide reads, in one-letter code: 2,3,4,5-tetrahydropyridine-2,6-dicarboxylate N-succinyltransferase (271 aa).

Residues Arg-102 and Asp-139 each contribute to the substrate site.

It belongs to the transferase hexapeptide repeat family. In terms of assembly, homotrimer.

The protein localises to the cytoplasm. It catalyses the reaction (S)-2,3,4,5-tetrahydrodipicolinate + succinyl-CoA + H2O = (S)-2-succinylamino-6-oxoheptanedioate + CoA. Its pathway is amino-acid biosynthesis; L-lysine biosynthesis via DAP pathway; LL-2,6-diaminopimelate from (S)-tetrahydrodipicolinate (succinylase route): step 1/3. The sequence is that of 2,3,4,5-tetrahydropyridine-2,6-dicarboxylate N-succinyltransferase from Coxiella burnetii (strain Dugway 5J108-111).